The chain runs to 767 residues: 5-methyltetrahydropteroyltriglutamate--homocysteine methyltransferase (767 aa).

Lysine 19 and asparagine 126 together coordinate 5-methyltetrahydropteroyltri-L-glutamate. L-homocysteine-binding positions include 446 to 448 (IGS) and glutamate 499. Residues 446–448 (IGS) and glutamate 499 contribute to the L-methionine site. 5-methyltetrahydropteroyltri-L-glutamate is bound by residues aspartate 504, tyrosine 527, 530 to 531 (RY), and tryptophan 576. Aspartate 614 contacts L-homocysteine. Residue aspartate 614 participates in L-methionine binding. Positions 657, 659, and 679 each coordinate Zn(2+). Histidine 707 acts as the Proton donor in catalysis. Cysteine 739 contacts Zn(2+).

The protein belongs to the vitamin-B12 independent methionine synthase family. Zn(2+) serves as cofactor.

It catalyses the reaction 5-methyltetrahydropteroyltri-L-glutamate + L-homocysteine = tetrahydropteroyltri-L-glutamate + L-methionine. Its pathway is amino-acid biosynthesis; L-methionine biosynthesis via de novo pathway; L-methionine from L-homocysteine (MetE route): step 1/1. With respect to regulation, inhibited weakly by methotrexate. Its function is as follows. Catalyzes the transfer of a methyl group from 5-methyltetrahydrofolate to homocysteine resulting in methionine formation. The polypeptide is 5-methyltetrahydropteroyltriglutamate--homocysteine methyltransferase (Candida albicans (strain SC5314 / ATCC MYA-2876) (Yeast)).